The primary structure comprises 223 residues: uncharacterized protein (223 aa).

This is an uncharacterized protein from Acanthamoeba polyphaga (Amoeba).